A 209-amino-acid polypeptide reads, in one-letter code: MEIRPTRIELIRTRRRIKLARKGLDLLKMKRSALIYEFLQISRTIRGMRENLRREVEDALNTIRTAEILEGQVALERIANMSSDSTINVDSRNVMGVVIPTLNLTYNLSILSDVYRTISVPVAINDAIDRFQRLFLNLIQILEKENALRNLLIEIDKTKRRSNAIENILIPRLEYQAKMIKMMLDERERDTFTTLKTIKKKIEAGKDEE.

The protein belongs to the V-ATPase D subunit family. As to quaternary structure, has multiple subunits with at least A(3), B(3), C, D, E, F, H, I and proteolipid K(x).

The protein resides in the cell membrane. Functionally, component of the A-type ATP synthase that produces ATP from ADP in the presence of a proton gradient across the membrane. This chain is A-type ATP synthase subunit D, found in Thermoplasma volcanium (strain ATCC 51530 / DSM 4299 / JCM 9571 / NBRC 15438 / GSS1).